Consider the following 570-residue polypeptide: Serine/threonine-protein kinase flr-4 (570 aa).

Residues 40-331 (YKYIQDLGKG…KLRIQIKKIL (292 aa)) enclose the Protein kinase domain. ATP is bound by residues 46 to 54 (LGKGRFGTV) and Lys67. Asp172 serves as the catalytic Proton acceptor. Residues 338 to 369 (EEETDISHPISNSNTDSSTAISHNHSNDRKVG) form a disordered region. Over residues 346 to 361 (PISNSNTDSSTAISHN) the composition is skewed to polar residues. 3 helical membrane passes run 400–420 (IMQIFVASGYYLSRILYFLNI), 425–445 (ICYLLLFLSLGITALGSFLLI), and 471–491 (LIISGILIVLMFALLFSCCMV). The disordered stretch occupies residues 550-570 (VRRNHDDYYYDESSGPANEEN).

The protein belongs to the protein kinase superfamily. Ser/Thr protein kinase family. Present in the intestinal cells from comma-stage embryos through the adult stage, although the intestinal expression is weaker after the L1 stage. Accumulates at the cell membrane of intestinal cells, especially the lateral membrane intervening the intestinal cells. Also detected in the muscles of the pharyngeal isthmus from the 3-fold embryonic stage, and in a pair of head neurons, which correspond to the AUA neurons, from the late L1 stage (at protein level).

It localises to the membrane. It catalyses the reaction L-seryl-[protein] + ATP = O-phospho-L-seryl-[protein] + ADP + H(+). The catalysed reaction is L-threonyl-[protein] + ATP = O-phospho-L-threonyl-[protein] + ADP + H(+). In terms of biological role, probable serine-threonine protein kinase involved in the control of defecation rhythms. Required to increase the length of defecation cycle period. Acts in a cell-functional rather than developmental aspect in the regulation of defecation rhythms. Prevents preferential activation of the p38 MAPK pathway in response to the levels of vitamin B12 in different food types during larval development, thereby regulating the expression of cytoprotective genes, modulating life span and stress tolerance. This Caenorhabditis elegans protein is Serine/threonine-protein kinase flr-4 (flr-4).